We begin with the raw amino-acid sequence, 122 residues long: Large ribosomal subunit protein uL18 (122 aa).

This sequence belongs to the universal ribosomal protein uL18 family. In terms of assembly, part of the 50S ribosomal subunit; part of the 5S rRNA/L5/L18/L25 subcomplex. Contacts the 5S and 23S rRNAs.

In terms of biological role, this is one of the proteins that bind and probably mediate the attachment of the 5S RNA into the large ribosomal subunit, where it forms part of the central protuberance. The polypeptide is Large ribosomal subunit protein uL18 (Desulfitobacterium hafniense (strain DSM 10664 / DCB-2)).